The chain runs to 161 residues: Peroxynitrite isomerase 2 (161 aa).

The GXWXGXG signature appears at 17 to 23 (GTWAGQG). Histidine 152 is a binding site for heme b.

Belongs to the nitrobindin family. As to quaternary structure, homodimer. Requires heme b as cofactor.

It carries out the reaction peroxynitrite = nitrate. Its pathway is nitrogen metabolism. Functionally, heme-binding protein able to scavenge peroxynitrite and to protect free L-tyrosine against peroxynitrite-mediated nitration, by acting as a peroxynitrite isomerase that converts peroxynitrite to nitrate. Therefore, this protein likely plays a role in peroxynitrite sensing and in the detoxification of reactive nitrogen and oxygen species (RNS and ROS, respectively). Is able to bind nitric oxide (NO) in vitro, but may act as a sensor of peroxynitrite levels in vivo. The polypeptide is Peroxynitrite isomerase 2 (Mycobacterium ulcerans (strain Agy99)).